Consider the following 544-residue polypeptide: MSIFIGGAWPYANGSLHLGHIASLLPGDILARYYRAKGENVLYVSGSDCNGTPIAIRAKQEGVTAKEIANKYHEEFQRCFRDLGFTYDCYTRTDSEHHHETVQKVFLRLLEEGYIYKKTVEQAYCKTCTQFLPDRYVEGICPHCHEAARGDQCDACSAILDPLDLLEKTCKLCGSTPSVEETEHFYFALHTFQQQIKKVVEIAKEKGTWRDNAIQLTERYVKEGLQDRVVSRDLPIGVPIPVKGYEDKKIYVWIEAVAGYYSASKYWAEETGKDDHEFWNSDAQTYYVHGKDNIPFHSIIWPAVLLGIGEEAIPRHIVSNEYLTVEKRKLSTSKNWAVWVPDILERYNPDSIRYFLTVNAPENRDTDFSWREFIYSHNSELLGAYGNFVNRTLKFIEKYYDGIVPQGTINVELKDKVEGLYKNVGEAIEQTTFKVALETIFDAVRFANKYFDERQPWKEREDNPVSCEETIYNCIYLIANFANLLEPFLPFSSERVRSTLSIVNRNWEPQNTLPNRIDSVQPLFERIDVKQIEHEIEKLYGAAK.

The 'HIGH' region signature appears at 10–20 (PYANGSLHLGH). The Zn(2+) site is built by C141, C144, C153, and C156. A 'KMSKS' region motif is present at residues 329 to 333 (KLSTS). T332 contacts ATP.

The protein belongs to the class-I aminoacyl-tRNA synthetase family. MetG type 1 subfamily. As to quaternary structure, monomer. Zn(2+) serves as cofactor.

It is found in the cytoplasm. The enzyme catalyses tRNA(Met) + L-methionine + ATP = L-methionyl-tRNA(Met) + AMP + diphosphate. In terms of biological role, is required not only for elongation of protein synthesis but also for the initiation of all mRNA translation through initiator tRNA(fMet) aminoacylation. The polypeptide is Methionine--tRNA ligase (Bacillus cereus (strain G9842)).